A 312-amino-acid chain; its full sequence is Glyoxylate/hydroxypyruvate reductase A (312 aa).

The active site involves R227. The active-site Proton donor is the H275.

Belongs to the D-isomer specific 2-hydroxyacid dehydrogenase family. GhrA subfamily.

The protein resides in the cytoplasm. The enzyme catalyses glycolate + NADP(+) = glyoxylate + NADPH + H(+). It carries out the reaction (R)-glycerate + NAD(+) = 3-hydroxypyruvate + NADH + H(+). The catalysed reaction is (R)-glycerate + NADP(+) = 3-hydroxypyruvate + NADPH + H(+). In terms of biological role, catalyzes the NADPH-dependent reduction of glyoxylate and hydroxypyruvate into glycolate and glycerate, respectively. The sequence is that of Glyoxylate/hydroxypyruvate reductase A from Salmonella choleraesuis (strain SC-B67).